The chain runs to 5142 residues: Protein piccolo (5142 aa).

A compositionally biased stretch (low complexity) spans 1-21 (MGNEASLEGEGLPEGLAAAAA). Disordered stretches follow at residues 1-154 (MGNE…SMMP) and 177-583 (DLIS…PSQG). 3 stretches are compositionally biased toward basic and acidic residues: residues 114-125 (RTTDTFRSEQKL), 136-150 (KESK…EHKS), and 188-202 (ETTK…EQGK). The span at 232-244 (QDGTPKSISSQQP) shows a compositional bias: polar residues. 2 stretches are compositionally biased toward pro residues: residues 298–317 (LPSP…PPAQ) and 352–371 (PVQP…PAKP). Positions 376 to 385 (TGSEKPSSEQ) are enriched in polar residues. Residues 397–555 (VGKTPAQQPG…PAKPSAQQST (159 aa)) form a 10 X 10 AA tandem approximate repeats of P-A-K-P-Q-P-Q-Q-P-X region. Positions 467–493 (TKPPSQLPGPAKPPPQQPGPAKPPPQQ) are enriched in pro residues. Low complexity predominate over residues 494-506 (PGSAKPPSQQPGS). The segment covering 507-522 (TKPPPQQPGPAKPSPQ) has biased composition (pro residues). Residues 523–554 (QPGSTKPPSQQPGSAKPSAQQPSPAKPSAQQS) are compositionally biased toward low complexity. Residues 589–613 (CPLCNTTELLLHVPEKANFNTCTEC) form a C4-type zinc finger. 2 disordered regions span residues 650–929 (LAPV…TVTG) and 945–1058 (LIST…PEST). Low complexity predominate over residues 673 to 683 (SKSSPQPQQTS). 2 stretches are compositionally biased toward basic and acidic residues: residues 684–702 (PKKD…EPKK) and 743–755 (EQDK…DKPK). Residues 765–774 (DLVSSSSATT) show a composition bias toward polar residues. Over residues 841–857 (KGQKQVDPVQKKEEPKK) the composition is skewed to basic and acidic residues. Residues 873–882 (KGSPTPPGPR) show a composition bias toward pro residues. Residues 889–927 (VPTPQQSPKPQEQSRRFSLNLGSITDAPKSQPTTPQETV) show a composition bias toward polar residues. S906 and S918 each carry phosphoserine. Residue T922 is modified to Phosphothreonine. Over residues 949–969 (AGQPGPHSQSGPGAPMKQAPA) the composition is skewed to low complexity. 2 stretches are compositionally biased toward basic and acidic residues: residues 996-1012 (VKKE…EPKA) and 1019-1034 (KRTE…KDSK). Residues 1059-1082 (CPLCKTELNIGSKDPPNFNTCTEC) form a C4-type zinc finger. 4 disordered regions span residues 1120 to 1163 (GDIR…QEQE), 1183 to 1386 (EKIP…TDEK), 1391 to 1410 (GLKK…SDLA), and 1423 to 1868 (QAST…SDPE). Positions 1126–1139 (PPAPSGPKASPMPV) are enriched in pro residues. Basic and acidic residues-rich tracts occupy residues 1193–1265 (QKQE…HDLL), 1307–1318 (PKEDDKTTKTIK), and 1330–1347 (DQVE…DKSD). Residues 1348-1358 (TSSSQQPKSPQ) show a composition bias toward low complexity. Phosphoserine is present on residues S1356, S1366, S1367, S1396, S1398, S1401, S1402, and S1405. The span at 1359–1374 (GLSDTGYSSDGISSSL) shows a compositional bias: polar residues. The segment covering 1398 to 1407 (SQESSPSSPS) has biased composition (low complexity). 2 stretches are compositionally biased toward basic and acidic residues: residues 1428 to 1451 (ADEK…DQEK) and 1469 to 1510 (KESQ…REPY). Phosphoserine is present on residues S1516, S1517, S1519, S1522, S1546, S1549, S1570, and S1572. Acidic residues predominate over residues 1564–1576 (SADEDASGSEDDE). A Phosphothreonine modification is found at T1617. S1618, S1628, and S1640 each carry phosphoserine. A compositionally biased stretch (acidic residues) spans 1631–1640 (DEDDEAFDES). Over residues 1641–1652 (PELKYRETKSQE) the composition is skewed to basic and acidic residues. Residues 1671-1689 (ELNSTIADKYSAESSQKKT) show a composition bias toward polar residues. The span at 1693–1703 (FDEEPELEMES) shows a compositional bias: acidic residues. S1703 bears the Phosphoserine mark. T1705 is subject to Phosphothreonine. Phosphoserine occurs at positions 1707 and 1712. The span at 1715-1732 (EGSSSLHASSFTPGTSPT) shows a compositional bias: polar residues. The segment covering 1772–1785 (DSSEEEELREEEEL) has biased composition (acidic residues). Residues S1773 and S1774 each carry the phosphoserine modification. Over residues 1786–1799 (LKEQEKQREIEQQQ) the composition is skewed to basic and acidic residues. T1825 bears the Phosphothreonine mark. The residue at position 1831 (S1831) is a Phosphoserine. The span at 1840–1855 (EELRQAAEMEELHRSS) shows a compositional bias: basic and acidic residues. Phosphoserine occurs at positions 1860, 1865, 1873, and 1894. 3 disordered regions span residues 2169 to 2192 (PSES…SSVC), 2365 to 2438 (ETFG…PTIL), and 2504 to 2536 (EPSK…PTGL). Low complexity-rich tracts occupy residues 2174–2192 (TSVP…SSVC) and 2374–2387 (SQLP…SSLP). 2 stretches are compositionally biased toward pro residues: residues 2404-2433 (QPPP…PTSP) and 2506-2517 (SKPPIAPKPVIP). S2562 bears the Phosphoserine mark. Phosphothreonine is present on T3069. Disordered stretches follow at residues 3407–3508 (EKQP…DKTK) and 3558–3626 (KTYK…LYSP). Positions 3432 to 3441 (DDPRSFKKIV) are enriched in basic and acidic residues. S3443 is modified (phosphoserine). T3447 and T3474 each carry phosphothreonine. Acidic residues predominate over residues 3474–3483 (TDDEDQDEWD). Polar residues predominate over residues 3574–3585 (DTQSPQYLSATS). Phosphoserine occurs at positions 3577, 3585, 3615, 3619, 3625, 3628, 3631, 3652, 3678, 3680, and 3686. Disordered stretches follow at residues 3652–3746 (SPQK…MGTV) and 3833–3908 (YMSD…QQSH). 2 stretches are compositionally biased toward polar residues: residues 3701 to 3716 (EGYT…SSGA) and 3733 to 3745 (STGT…TMGT). Phosphoserine is present on S3835. The segment covering 3845 to 3857 (TRIESQHGIERPR) has biased composition (basic and acidic residues). Residues 3859–3908 (APQTEFSQFIPPQTQTESQLVPPTSPYTQYQYSSPALPTQAPTSYTQQSH) show a composition bias toward polar residues. A phosphoserine mark is found at S4088 and S4204. Residues 4278–4301 (EADKPYSSGSRSRPSSRPSSVYGL) are disordered. The segment covering 4282-4301 (PYSSGSRSRPSSRPSSVYGL) has biased composition (low complexity). S4358, S4362, S4365, S4394, and S4430 each carry phosphoserine. Residues 4389–4411 (RDQFGSSHSLPEVQQHMREESRT) are disordered. The region spanning 4496-4590 (RIKITRDSKD…EAEICVRLDL (95 aa)) is the PDZ domain. Disordered regions lie at residues 4597 to 4618 (ENSQ…KSPG) and 4645 to 4690 (EKGS…TKVV). Over residues 4598 to 4615 (NSQHLELHEPPKAVDKAK) the composition is skewed to basic and acidic residues. The span at 4652–4673 (SGPTSAGSSSVPSPGQPGSPSV) shows a compositional bias: low complexity. The residue at position 4664 (S4664) is a Phosphoserine. The C2 1 domain occupies 4694 to 4823 (ITGEIQLQIN…SHLDNTPRWY (130 aa)). Positions 4723 and 4729 each coordinate Ca(2+). Phosphoserine is present on S4778. Ca(2+) contacts are provided by D4793, D4795, S4798, and D4801. Disordered stretches follow at residues 4830-4907 (ESID…VTQT) and 4930-4986 (PTKP…QNGQ). Low complexity-rich tracts occupy residues 4838–4853 (HSSQ…SVIK) and 4877–4887 (SSPGSSKSSSE). Over residues 4895–4907 (PSRSQSKTSVTQT) the composition is skewed to polar residues. Over residues 4941-4965 (SSVSTGSSGSSFGSGYSVDSEGSSS) the composition is skewed to low complexity. Positions 5007 to 5132 (VMGEIKIALK…DLRKRIVNWH (126 aa)) constitute a C2 2 domain.

In terms of assembly, interacts with BSN, ERC2/CAST1, RIMS1 and UNC13A. Interacts (via C-terminus) with TRIO (via N-terminus). Interacts with CTBP1. Interacts with SIAH1; this interaction negatively regulates SIAH1 E3 ligase activity. Directly interacts with GIT1 and GIT2. It depends on Ca(2+) as a cofactor. Moderately expressed in the developing cerebral cortex.

It is found in the presynaptic active zone. Scaffold protein of the presynaptic cytomatrix at the active zone (CAZ) which is the place in the synapse where neurotransmitter is released. After synthesis, participates in the formation of Golgi-derived membranous organelles termed Piccolo-Bassoon transport vesicles (PTVs) that are transported along axons to sites of nascent synaptic contacts. At the presynaptic active zone, regulates the spatial organization of synaptic vesicle cluster, the protein complexes that execute membrane fusion and compensatory endocytosis. Organizes as well the readily releasable pool of synaptic vesicles and safeguards a fraction of them to be not immediately available for action potential-induced release. Also functions in processes other than assembly such as the regulation of specific presynaptic protein ubiquitination by interacting with SIAH1 or the regulation of presynaptic autophagy. Also mediates synapse to nucleus communication leading to reconfiguration of gene expression by associating with the transcriptional corepressor CTBP1 and by subsequently reducing the size of its pool available for nuclear import. This chain is Protein piccolo, found in Homo sapiens (Human).